Here is a 263-residue protein sequence, read N- to C-terminus: Ribosomal RNA small subunit methyltransferase A (263 aa).

5 residues coordinate S-adenosyl-L-methionine: Ile18, Gly43, Glu65, Asp91, and Asn110.

It belongs to the class I-like SAM-binding methyltransferase superfamily. rRNA adenine N(6)-methyltransferase family. RsmA subfamily.

The protein localises to the cytoplasm. The enzyme catalyses adenosine(1518)/adenosine(1519) in 16S rRNA + 4 S-adenosyl-L-methionine = N(6)-dimethyladenosine(1518)/N(6)-dimethyladenosine(1519) in 16S rRNA + 4 S-adenosyl-L-homocysteine + 4 H(+). Its function is as follows. Specifically dimethylates two adjacent adenosines (A1518 and A1519) in the loop of a conserved hairpin near the 3'-end of 16S rRNA in the 30S particle. May play a critical role in biogenesis of 30S subunits. This Ehrlichia chaffeensis (strain ATCC CRL-10679 / Arkansas) protein is Ribosomal RNA small subunit methyltransferase A.